A 344-amino-acid polypeptide reads, in one-letter code: Putative [LysW]-lysine/[LysW]-ornithine hydrolase (344 aa).

A Zn(2+)-binding site is contributed by His-66. The active site involves Asp-68. Asp-90 contacts Zn(2+). Residue Glu-117 is the Proton acceptor of the active site. Zn(2+)-binding residues include Glu-118, Glu-139, and His-297.

This sequence belongs to the peptidase M20A family. LysK subfamily. It depends on Zn(2+) as a cofactor. Requires Co(2+) as cofactor.

The protein resides in the cytoplasm. The catalysed reaction is [amino-group carrier protein]-C-terminal-gamma-(L-lysyl)-L-glutamate + H2O = [amino-group carrier protein]-C-terminal-L-glutamate + L-lysine. The enzyme catalyses [amino-group carrier protein]-C-terminal-gamma-(L-ornithyl)-L-glutamate + H2O = [amino-group carrier protein]-C-terminal-L-glutamate + L-ornithine. Its pathway is amino-acid biosynthesis; L-lysine biosynthesis via AAA pathway; L-lysine from L-alpha-aminoadipate (Thermus route): step 5/5. It functions in the pathway amino-acid biosynthesis; L-arginine biosynthesis. In terms of biological role, catalyzes the release of L-lysine from [LysW]-gamma-L-lysine and the release of L-ornithine from [LysW]-L-ornithine. This is Putative [LysW]-lysine/[LysW]-ornithine hydrolase from Thermococcus kodakarensis (strain ATCC BAA-918 / JCM 12380 / KOD1) (Pyrococcus kodakaraensis (strain KOD1)).